Reading from the N-terminus, the 448-residue chain is Chromosomal replication initiator protein DnaA (448 aa).

Positions 1–73 (MSTHLTETWE…VNALKLLTSK (73 aa)) are domain I, interacts with DnaA modulators. The tract at residues 73-109 (KKYNIDFIVTTEEKIEENEKNHNNEKSNIVVNDEMST) is domain II. The domain III, AAA+ region stretch occupies residues 110-326 (MLNPKYTFDS…GALIRIVAFS (217 aa)). ATP is bound by residues Gly154, Gly156, Lys157, and Thr158. A domain IV, binds dsDNA region spans residues 327–448 (SLTNKEISVD…NELNKRINQK (122 aa)).

This sequence belongs to the DnaA family. Oligomerizes as a right-handed, spiral filament on DNA at oriC.

The protein localises to the cytoplasm. Functionally, plays an essential role in the initiation and regulation of chromosomal replication. ATP-DnaA binds to the origin of replication (oriC) to initiate formation of the DNA replication initiation complex once per cell cycle. Binds the DnaA box (a 9 base pair repeat at the origin) and separates the double-stranded (ds)DNA. Forms a right-handed helical filament on oriC DNA; dsDNA binds to the exterior of the filament while single-stranded (ss)DNA is stabiized in the filament's interior. The ATP-DnaA-oriC complex binds and stabilizes one strand of the AT-rich DNA unwinding element (DUE), permitting loading of DNA polymerase. After initiation quickly degrades to an ADP-DnaA complex that is not apt for DNA replication. Binds acidic phospholipids. The protein is Chromosomal replication initiator protein DnaA of Clostridium botulinum (strain 657 / Type Ba4).